The sequence spans 75 residues: Protein SlyX homolog (75 aa).

It belongs to the SlyX family.

In Chromobacterium violaceum (strain ATCC 12472 / DSM 30191 / JCM 1249 / CCUG 213 / NBRC 12614 / NCIMB 9131 / NCTC 9757 / MK), this protein is Protein SlyX homolog.